The sequence spans 354 residues: Probable L-ascorbate-6-phosphate lactonase UlaG (354 aa).

The protein belongs to the UlaG family. It depends on a divalent metal cation as a cofactor.

The protein localises to the cytoplasm. It catalyses the reaction L-ascorbate 6-phosphate + H2O = 3-dehydro-L-gulonate 6-phosphate. It functions in the pathway cofactor degradation; L-ascorbate degradation; D-xylulose 5-phosphate from L-ascorbate: step 1/4. Its function is as follows. Probably catalyzes the hydrolysis of L-ascorbate-6-P into 3-keto-L-gulonate-6-P. Is essential for L-ascorbate utilization under anaerobic conditions. This chain is Probable L-ascorbate-6-phosphate lactonase UlaG, found in Escherichia coli O127:H6 (strain E2348/69 / EPEC).